The following is a 278-amino-acid chain: Release factor glutamine methyltransferase (278 aa).

Residues 117–121 (GTGSG), aspartate 140, and asparagine 184 contribute to the S-adenosyl-L-methionine site. 184–187 (NPPY) is a binding site for substrate.

It belongs to the protein N5-glutamine methyltransferase family. PrmC subfamily.

The enzyme catalyses L-glutaminyl-[peptide chain release factor] + S-adenosyl-L-methionine = N(5)-methyl-L-glutaminyl-[peptide chain release factor] + S-adenosyl-L-homocysteine + H(+). Methylates the class 1 translation termination release factors RF1/PrfA and RF2/PrfB on the glutamine residue of the universally conserved GGQ motif. This is Release factor glutamine methyltransferase from Bacteroides thetaiotaomicron (strain ATCC 29148 / DSM 2079 / JCM 5827 / CCUG 10774 / NCTC 10582 / VPI-5482 / E50).